We begin with the raw amino-acid sequence, 844 residues long: Translation initiation factor IF-2 (844 aa).

Positions 1–11 (MTEDVKADAPK) are enriched in basic and acidic residues. 2 disordered regions span residues 1–48 (MTED…VKTD) and 79–249 (RLEA…GTAL). Low complexity predominate over residues 21–30 (TTVSSTTTGG). Basic and acidic residues predominate over residues 79–161 (RLEAEKAATK…AAEEAKRYAE (83 aa)). Residues 162-175 (ADDSDNESSSEDYS) show a composition bias toward acidic residues. Residues 200-210 (RGKNKVAKAKK) are compositionally biased toward basic residues. Basic and acidic residues predominate over residues 211 to 237 (GGRDDENSKNSKNERESNRKNQKDAKF). Positions 343–513 (TRAPVVTIMG…LLQSEVLELT (171 aa)) constitute a tr-type G domain. Positions 352-359 (GHVDHGKT) are G1. 352–359 (GHVDHGKT) contributes to the GTP binding site. A G2 region spans residues 377 to 381 (GITQH). The interval 399–402 (DTPG) is G3. Residues 399 to 403 (DTPGH) and 453 to 456 (NKID) contribute to the GTP site. The G4 stretch occupies residues 453-456 (NKID). Positions 489–491 (SAK) are G5.

This sequence belongs to the TRAFAC class translation factor GTPase superfamily. Classic translation factor GTPase family. IF-2 subfamily.

Its subcellular location is the cytoplasm. In terms of biological role, one of the essential components for the initiation of protein synthesis. Protects formylmethionyl-tRNA from spontaneous hydrolysis and promotes its binding to the 30S ribosomal subunits. Also involved in the hydrolysis of GTP during the formation of the 70S ribosomal complex. The protein is Translation initiation factor IF-2 of Haemophilus influenzae (strain 86-028NP).